The following is an 859-amino-acid chain: Protein translocase subunit SecA (859 aa).

Residues Gln-88, 106–110 (GEGKT), and Asp-496 each bind ATP. Residues 818-838 (FSHQPQSEVKVSRNDPCPCGS) are disordered. Residues Cys-834, Cys-836, Cys-845, and Cys-846 each coordinate Zn(2+).

The protein belongs to the SecA family. In terms of assembly, monomer and homodimer. Part of the essential Sec protein translocation apparatus which comprises SecA, SecYEG and auxiliary proteins SecDF-YajC and YidC. It depends on Zn(2+) as a cofactor.

It is found in the cell inner membrane. The protein localises to the cytoplasm. It catalyses the reaction ATP + H2O + cellular proteinSide 1 = ADP + phosphate + cellular proteinSide 2.. Its function is as follows. Part of the Sec protein translocase complex. Interacts with the SecYEG preprotein conducting channel. Has a central role in coupling the hydrolysis of ATP to the transfer of proteins into and across the cell membrane, serving as an ATP-driven molecular motor driving the stepwise translocation of polypeptide chains across the membrane. This chain is Protein translocase subunit SecA, found in Wolinella succinogenes (strain ATCC 29543 / DSM 1740 / CCUG 13145 / JCM 31913 / LMG 7466 / NCTC 11488 / FDC 602W) (Vibrio succinogenes).